The chain runs to 414 residues: MAKAKVKQDQSPSGSALGKAANSQKQTKKQKKKKFWKNHPKIAGKTSEAKTLFPLLPPKQPQEFSSNWKALQELLKPKLNPAAPATPSEKFPKKDQKVSEKKNGDPEPPKSTPKINGGITSVTPKEAKAPSQAPPTKAVEVKKEKKRKIKAEGTEQLDPPKKPQGGTQPEPPKVDIWFDDVDPDDIEAALGPEAGRIAREMQGVTETAPPTAEKVLVKEKAFEGLTRTVAMDCEMVGVGLDGEESMLARVSIVNLFGKCVYDKYVRPTERVTDYRTAVSGIRPDDIKNGEAFKDVQAEVAEILRGRTLVGHAVHNDLKILFLDHPKKAIRDTQKYKPFKEKVKSGRPSLKLLCEKILNVKVQTGEHCSVQDAQAAMRLYTMEKKCWEAAIKAKYAGVTAAKAKGPQKDKQPPAQ.

The segment at 1–174 is disordered; the sequence is MAKAKVKQDQ…GGTQPEPPKV (174 aa). Basic residues predominate over residues 26–42; sequence QTKKQKKKKFWKNHPKI. Basic and acidic residues-rich tracts occupy residues 90–108 and 150–161; these read KFPK…DPEP and KAEGTEQLDPPK. The Exonuclease domain occupies 228–379; the sequence is TVAMDCEMVG…QDAQAAMRLY (152 aa).

This sequence belongs to the REXO4 family.

The protein resides in the nucleus. This is RNA exonuclease 4 (rexo4) from Xenopus tropicalis (Western clawed frog).